We begin with the raw amino-acid sequence, 88 residues long: Small ribosomal subunit protein uS15c (88 aa).

The protein belongs to the universal ribosomal protein uS15 family. Part of the 30S ribosomal subunit.

The protein resides in the plastid. It localises to the chloroplast. The protein is Small ribosomal subunit protein uS15c (rps15) of Cycas taitungensis (Prince sago).